The chain runs to 105 residues: Large ribosomal subunit protein uL24 (105 aa).

The protein belongs to the universal ribosomal protein uL24 family. Part of the 50S ribosomal subunit.

One of two assembly initiator proteins, it binds directly to the 5'-end of the 23S rRNA, where it nucleates assembly of the 50S subunit. Its function is as follows. One of the proteins that surrounds the polypeptide exit tunnel on the outside of the subunit. The sequence is that of Large ribosomal subunit protein uL24 from Cellvibrio japonicus (strain Ueda107) (Pseudomonas fluorescens subsp. cellulosa).